An 862-amino-acid polypeptide reads, in one-letter code: Rho guanine nucleotide exchange factor 7 (862 aa).

A Calponin-homology (CH) domain is found at 1–112; it reads MNSAEQTVTW…SLVTLNKVTA (112 aa). Phosphoserine occurs at positions 132, 155, 164, 228, and 236. The SH3 domain occupies 163 to 222; it reads NSQLVVRAKFNFQQTNEDELSFSKGDVIHVTRVEEGGWWEGTHNGRTGWFPSNYVREIKP. The region spanning 250 to 430 is the DH domain; that stretch reads YYNVVLQNIL…KNLSAQCQEV (181 aa). A PH domain is found at 452-557; sequence DIKTLGSVTY…WVEHLQKQTK (106 aa). The residue at position 497 (Ser497) is a Phosphoserine. Disordered stretches follow at residues 559 to 591, 657 to 679, and 728 to 748; these read TSVS…ADSK, KTMK…EFAV, and DQSS…EPSD. Residues 572–585 are compositionally biased toward polar residues; it reads PSHTLPSHPLTPSS. Positions 657 to 669 are enriched in basic residues; that stretch reads KTMKKLLPKRKPE. The segment covering 670 to 679 has biased composition (basic and acidic residues); it reads RKPSDEEFAV. Ser673 carries the post-translational modification Phosphoserine. The segment covering 731-744 has biased composition (low complexity); the sequence is SLDSLGRRSSLSRL. A Phosphoserine modification is found at Ser776. The stretch at 804-854 forms a coiled coil; the sequence is KSLVDTVYALKDEVQELRQDNKKMKKSLEEEQRARKDLEKLVRKVLKNMND.

Interacts with PAK kinases through the SH3 domain. Interacts with unphosphorylated PAK1. Interacts with ITCH. Interacts with SCRIB; interaction is direct and may play a role in regulation of apoptosis. Interacts with GIT1 and TGFB1I1. Interacts with FRMPD4 (via N-terminus). Interacts with CaMK1. Interacts with BIN2. Interacts with PTK2/FAK1 and RAC1. Interacts with PARVB. Interacts with YWHAZ. Interacts (via PH domain) with NOX1 (via FAD-binding FR-type domain). Phosphorylated on Ser-673 by CaMK1; enhancement of GEF activity and downstream activation of RAC1. Phosphorylated by PTK2/FAK1; this promotes interaction with RAC1. Seems to be expressed in the central nervous system. Isoform B, isoform C and isoform E are expressed with highest levels in brain and testis.

It localises to the cell junction. It is found in the focal adhesion. Its subcellular location is the cell projection. The protein resides in the ruffle. The protein localises to the cytoplasm. It localises to the cell cortex. It is found in the lamellipodium. Its function is as follows. Acts as a RAC1 guanine nucleotide exchange factor (GEF) and can induce membrane ruffling. May function as a positive regulator of apoptosis. Functions in cell migration, attachment and cell spreading. Promotes targeting of RAC1 to focal adhesions. Downstream of NMDA receptors and CaMKK-CaMK1 signaling cascade, promotes the formation of spines and synapses in hippocampal neurons. The protein is Rho guanine nucleotide exchange factor 7 (Arhgef7) of Mus musculus (Mouse).